We begin with the raw amino-acid sequence, 383 residues long: Sensory histidine kinase/phosphatase NtrB (383 aa).

The Histidine kinase domain maps to 147–366 (SLAHEIKNPL…TFRVLMPASK (220 aa)). A Phosphohistidine; by autocatalysis modification is found at His-150.

In terms of processing, autophosphorylated.

The protein localises to the cytoplasm. It catalyses the reaction ATP + protein L-histidine = ADP + protein N-phospho-L-histidine.. Member of the two-component regulatory system NtrB/NtrC, which controls expression of the nitrogen-regulated (ntr) genes in response to nitrogen limitation. Under conditions of nitrogen limitation, NtrB autophosphorylates and transfers the phosphoryl group to NtrC. In the presence of nitrogen, acts as a phosphatase that dephosphorylates and inactivates NtrC. The protein is Sensory histidine kinase/phosphatase NtrB (ntrB) of Rhizobium leguminosarum bv. phaseoli.